A 1035-amino-acid polypeptide reads, in one-letter code: MEELNIDFDVFKKRIELLYSKYNEFEGSPNSLLFVLGSSNAENPYQKTTILHNWLLSYEFPATLIALVPGKVIIITSSAKAKHLQKAIDLFKDPESKITLELWQRNNKEPELNKKLFDDVIALINSAGKTVGIPEKDSYQGKFMTEWNPVWEAAVKENEFNVIDISLGLSKVWEVKDVNEQAFLSVSSKGSDKFMDLLSNEMVRAVDEELKITNAKLSDKIENKIDDVKFLKQLSPDLSALCPPNYKFNFDLLDWTYSPIIQSGKKFDLRVSARSTNDQLYGNGCILASCGIRYNNYCSNITRTFLIDPSEEMANNYDFLLTLQKEIVTNILKPGRTPKEVYESVIEYIEKTKPELVPNFTKNIGSLIGLEFRDSNFILNVKNDYRKIQRGDCFNISFGFNNLKDSQSANNYALQLADTVQIPLDETEPPRFLTNYTKAKSQISFYFNNEEEDNNKKKSSPATKVPSKPDRNSKILRTKLRGEARGGAEDAQKEQIRKENQKKLHEKLEKNGLLRFSAADANGPDSEPRQYFKKYESYVRDSQLPTNIRDLRIHVDWKSQTIILPIYGRPVPFHINSYKNGSKNEEGEYTYLRLNFNSPGSSGGISKKVEELPYEESADNQFVRSITLRSKDGDRMSETFKQIADLKKEATKREQERKALADVVQQDKLIENKTGRTKRLDQIFVRPNPDTKRVPSTVFIHENGIRFQSPLRTDSRIDILFSNIKNLIFQSCKGELIVVIHIHLKNPILMGKKKIQDVQFYREASDMSVDETGGGRRGQSRFRRYGDEDELEQEQEERRKRAALDKEFKYFADAIAEASNGLLTVENTFRDLGFQGVPNRSAVFCMPTTDCLVQLIEPPFLVINLEEVEICILERVQFGLKNFDMVFVYKDFNKPVTHINTVPIESLDFLKQWLTDMDIPYTVSTINLNWATIMKSLQDDPYQFFLDGGWNFLATGSDDEASDESEEEVSEYEASEDDVSDESAFSEDEEGSEVDDDISGDESEDYTGDESEEGEDWDELEKKAARADRGANFRD.

Positions 208–234 (EELKITNAKLSDKIENKIDDVKFLKQL) form a coiled coil. The tract at residues 448–496 (NNEEEDNNKKKSSPATKVPSKPDRNSKILRTKLRGEARGGAEDAQKEQI) is disordered. A compositionally biased stretch (basic and acidic residues) spans 480–496 (LRGEARGGAEDAQKEQI). At Ser-526 the chain carries Phosphoserine. Positions 636-666 (MSETFKQIADLKKEATKREQERKALADVVQQ) form a coiled coil. Residue Ser-765 is modified to Phosphoserine. Disordered regions lie at residues 768-796 (SVDETGGGRRGQSRFRRYGDEDELEQEQE) and 956-1035 (GSDD…NFRD). Residues 957 to 1019 (SDDEASDESE…ESEEGEDWDE (63 aa)) show a composition bias toward acidic residues. Positions 959-983 (DEASDESEEEVSEYEASEDDVSDES) form a coiled coil. A compositionally biased stretch (basic and acidic residues) spans 1020–1035 (LEKKAARADRGANFRD).

This sequence belongs to the peptidase M24 family. SPT16 subfamily. Forms a stable heterodimer with POB3. The SPT16-POB3 dimer weakly associates with multiple molecules of NHP6 (NHP6A or NHP6B) to form the FACT (yFACT or SNP) complex. The FACT complex interacts with the CK2 (casein kinase II) complex subunits CKA1, CKA2, CKB1 and CKB2 and the components of the transcription machinery CHD1, CTR9, PAF1 and CDC73. The FACT complex interacts with the PAF1 complex. Interacts with POL1. Interacts with SAS3. Interacts with YTA7.

Its subcellular location is the nucleus. It is found in the chromosome. Its function is as follows. Component of the FACT complex, a general chromatin factor that acts to reorganize nucleosomes. The FACT complex is involved in multiple processes that require DNA as a template such as mRNA elongation, DNA replication and DNA repair. During transcription elongation the FACT complex acts as a histone chaperone that both destabilizes and restores nucleosomal structure. It facilitates the passage of RNA polymerase II and transcription by promoting the dissociation of one histone H2A-H2B dimer from the nucleosome, then subsequently promotes the reestablishment of the nucleosome following the passage of RNA polymerase II. Transcription elongation is promoted by the repression of transcription initiation from cryptic sites. Also acts in establishing transcription initiation complexes and promotes SPT15/TBP-binding to a TATA box. Together with replication factor-A protein (RPA), FACT may play a role in nucleosome deposition during DNA replication. This Saccharomyces cerevisiae (strain ATCC 204508 / S288c) (Baker's yeast) protein is FACT complex subunit SPT16 (SPT16).